The following is a 201-amino-acid chain: Protein GrpE (201 aa).

Belongs to the GrpE family. Homodimer.

It is found in the cytoplasm. Its function is as follows. Participates actively in the response to hyperosmotic and heat shock by preventing the aggregation of stress-denatured proteins, in association with DnaK and GrpE. It is the nucleotide exchange factor for DnaK and may function as a thermosensor. Unfolded proteins bind initially to DnaJ; upon interaction with the DnaJ-bound protein, DnaK hydrolyzes its bound ATP, resulting in the formation of a stable complex. GrpE releases ADP from DnaK; ATP binding to DnaK triggers the release of the substrate protein, thus completing the reaction cycle. Several rounds of ATP-dependent interactions between DnaJ, DnaK and GrpE are required for fully efficient folding. The sequence is that of Protein GrpE from Shewanella denitrificans (strain OS217 / ATCC BAA-1090 / DSM 15013).